A 579-amino-acid chain; its full sequence is L-ascorbate oxidase (579 aa).

The signal sequence occupies residues 1-30; that stretch reads MLQMGKAREPNFLILFFFGLILAFGISSEG. 2 Plastocyanin-like domains span residues 33–152 and 164–330; these read IRHY…LIVD and DGEI…NYLP. Intrachain disulfides connect Cys-49/Cys-231, Cys-111/Cys-568, and Cys-210/Cys-223. Cu cation contacts are provided by His-90 and His-92. N-linked (GlcNAc...) asparagine glycosylation occurs at Asn-122. Cu cation-binding residues include His-134 and His-136. N-linked (GlcNAc...) asparagine glycans are attached at residues Asn-355 and Asn-470. Residues 374–553 enclose the Plastocyanin-like 3 domain; sequence NRRIFLLNTQ…HMGMGVVFAE (180 aa). Residues His-475, His-478, His-480, His-536, Cys-537, His-538, His-542, and Met-547 each coordinate Cu cation.

This sequence belongs to the multicopper oxidase family. As to quaternary structure, dimer. It depends on Cu cation as a cofactor.

The protein localises to the secreted. It catalyses the reaction 4 L-ascorbate + O2 = 4 monodehydro-L-ascorbate radical + 2 H2O. In terms of biological role, may be involved in a redox system involving ascorbic acid. The polypeptide is L-ascorbate oxidase (AAO) (Cucurbita maxima (Pumpkin)).